Reading from the N-terminus, the 167-residue chain is UPF0225 protein VV1358 (167 aa).

This sequence belongs to the UPF0225 family.

The chain is UPF0225 protein VV1358 from Vibrio vulnificus (strain YJ016).